The sequence spans 63 residues: Prokaryotic ubiquitin-like protein Pup 1 (63 aa).

Composition is skewed to basic and acidic residues over residues 1-12 (MSQEKVQRHGGG) and 24-33 (GQERREKLGE). The disordered stretch occupies residues 1–35 (MSQEKVQRHGGGDGEEESGPEAAGQERREKLGEDV). The ARC ATPase binding stretch occupies residues 20–57 (PEAAGQERREKLGEDVDAILDEIDDVLEENAEDFVRAY). A coiled-coil region spans residues 25-51 (QERREKLGEDVDAILDEIDDVLEENAE). Glutamine 63 bears the Deamidated glutamine mark. Glutamine 63 participates in a covalent cross-link: Isoglutamyl lysine isopeptide (Gln-Lys) (interchain with K-? in acceptor proteins).

It belongs to the prokaryotic ubiquitin-like protein family. As to quaternary structure, strongly interacts with the proteasome-associated ATPase ARC through a hydrophobic interface; the interacting region of Pup lies in its C-terminal half. There is one Pup binding site per ARC hexamer ring. Post-translationally, is modified by deamidation of its C-terminal glutamine to glutamate by the deamidase Dop, a prerequisite to the subsequent pupylation process.

Its pathway is protein degradation; proteasomal Pup-dependent pathway. Its function is as follows. Protein modifier that is covalently attached to lysine residues of substrate proteins, thereby targeting them for proteasomal degradation. The tagging system is termed pupylation. This chain is Prokaryotic ubiquitin-like protein Pup 1, found in Saccharopolyspora erythraea (strain ATCC 11635 / DSM 40517 / JCM 4748 / NBRC 13426 / NCIMB 8594 / NRRL 2338).